We begin with the raw amino-acid sequence, 283 residues long: Tetraspanin-33 (283 aa).

Over 1–24 (MARRPGAPAAYGEDFSFVSPLVKY) the chain is Cytoplasmic. Residues 25–45 (LLFFFNMLFWVISMVMVAVGV) traverse the membrane as a helical segment. Over 46–64 (YARLMKHEEAALACLAVDP) the chain is Extracellular. A helical transmembrane segment spans residues 65 to 85 (AILLIVVGILMFLLTFCGCIG). At 86 to 96 (SLRENICLLQT) the chain is on the cytoplasmic side. A helical transmembrane segment spans residues 97–117 (FSLCLTVVFLLQLAAGVLGFV). Topologically, residues 118–235 (FSDKVRGKVS…DRLVNWIHSN (118 aa)) are extracellular. 4 cysteine pairs are disulfide-bonded: Cys-156–Cys-224, Cys-157–Cys-189, Cys-173–Cys-183, and Cys-190–Cys-203. N-linked (GlcNAc...) asparagine glycosylation occurs at Asn-172. The helical transmembrane segment at 236-256 (LFVLGGVALGLAIPQLVGIML) threads the bilayer. Residues 257-283 (SMILVSQIKDQIKLQLYNQQHRADPWY) are Cytoplasmic-facing.

It belongs to the tetraspanin (TM4SF) family. As to quaternary structure, homodimer; disulfide-linked. Interacts (via extracellular domain) with ADAM10 (via extracellular domain). Interacts (via cytoplasmic domain) with PLEKHA7 (via WW domains); the interaction is dependent on PDZD11 being bound to PLEKHA7 and facilitates the docking of ADAM10 to zonula adherens.

Its subcellular location is the cell membrane. The protein resides in the cell junction. The protein localises to the adherens junction. It is found in the cytoplasm. Its function is as follows. Part of TspanC8 subgroup, composed of 6 members that interact with the transmembrane metalloprotease ADAM10. This interaction is required for ADAM10 exit from the endoplasmic reticulum and for enzymatic maturation and trafficking to the cell surface as well as substrate specificity. Different TspanC8/ADAM10 complexes have distinct substrates. Plays an important role in normal erythropoiesis. It has a role in the differentiation of erythroid progenitors. Negatively regulates ligand-induced Notch activity probably by regulating ADAM10 activity. Mediates docking of ADAM10 to zonula adherens by interacting with ADAM10 and, in a PDZD11-dependent manner, with the zonula adherens protein PLEKHA7. The polypeptide is Tetraspanin-33 (TSPAN33) (Bos taurus (Bovine)).